Consider the following 387-residue polypeptide: L-aspartate:5-guanidino-3-methyl-2-oxopentanoate transaminase (387 aa).

Lys237 is subject to N6-(pyridoxal phosphate)lysine.

It belongs to the class-I pyridoxal-phosphate-dependent aminotransferase family. The cofactor is pyridoxal 5'-phosphate.

The catalysed reaction is (3R)-5-guanidino-3-methyl-2-oxopentanoate + L-aspartate = (3R)-3-methyl-L-arginine + oxaloacetate. It functions in the pathway antibiotic biosynthesis. Functionally, aminotransferase involved in the formation of the rare amino acid 3-methylarginine (MeArg), which is used as a potent antibiotic against the closely related soybean pathogen P.syringae pv. glycinea. Probably catalyzes transamination from the donor L-aspartate to 5-guanidino-3-methyl-2-oxopentanoic acid, generating 3-methylarginine. This is L-aspartate:5-guanidino-3-methyl-2-oxopentanoate transaminase from Pseudomonas syringae pv. syringae.